A 609-amino-acid chain; its full sequence is Membrane protein insertase YidC (609 aa).

A helical membrane pass occupies residues 9 to 29 (IIAIVLSGLILIAWQYFYNIP). The disordered stretch occupies residues 35 to 63 (RAAQQAQSQTAKSPTEPTPNSPKPDHPAA). 4 consecutive transmembrane segments (helical) span residues 375-395 (VFGN…AIFF), 449-469 (LPMV…FVTI), 507-527 (LLGP…TMWF), and 546-566 (WMPV…VIYW).

The protein belongs to the OXA1/ALB3/YidC family. Type 1 subfamily. In terms of assembly, interacts with the Sec translocase complex via SecD. Specifically interacts with transmembrane segments of nascent integral membrane proteins during membrane integration.

It is found in the cell inner membrane. Functionally, required for the insertion and/or proper folding and/or complex formation of integral membrane proteins into the membrane. Involved in integration of membrane proteins that insert both dependently and independently of the Sec translocase complex, as well as at least some lipoproteins. Aids folding of multispanning membrane proteins. The sequence is that of Membrane protein insertase YidC from Nitrobacter hamburgensis (strain DSM 10229 / NCIMB 13809 / X14).